The sequence spans 172 residues: Monopolar attachment protein 1 (172 aa).

The span at 15–30 shows a compositional bias: basic residues; sequence KKNKNPKISNSKKKNS. The tract at residues 15-43 is disordered; sequence KKNKNPKISNSKKKNSTRPALQDKTNQTL. The segment covering 31–43 has biased composition (polar residues); sequence TRPALQDKTNQTL. The POLO box domain (PBD)-binding signature appears at 100-102; that stretch reads STP.

Interacts with rec8, Interacts with plo1.

It is found in the nucleus. Its subcellular location is the chromosome. The protein localises to the centromere. It localises to the kinetochore. Plays an important role in chromosome segregation during meiosis I by allowing meiotic rec8 to establish cohesion at the centromeric central core and thereby promote the side-by-side structure of kinetochores at meiosis I. Enables monopolar attachment during meiosis I. Required to facilitate kinetochore mono-orientation during meiosis I, when kinetochores on sister chromosomes face the same direction and are thus captured and pulled by spindle fibers from the same pole. Acts in collaboration with plo1. In Schizosaccharomyces pombe (strain 972 / ATCC 24843) (Fission yeast), this protein is Monopolar attachment protein 1 (moa1).